Reading from the N-terminus, the 416-residue chain is Histidine--tRNA ligase (416 aa).

Belongs to the class-II aminoacyl-tRNA synthetase family.

The protein resides in the cytoplasm. It carries out the reaction tRNA(His) + L-histidine + ATP = L-histidyl-tRNA(His) + AMP + diphosphate + H(+). This Methanocaldococcus jannaschii (strain ATCC 43067 / DSM 2661 / JAL-1 / JCM 10045 / NBRC 100440) (Methanococcus jannaschii) protein is Histidine--tRNA ligase (hisS).